The following is a 103-amino-acid chain: MQKIRLKLKAYDHRVLDRTVAAIVEAVKRTGADVRGPVPMPTKVKRYTVLKSPHINKDSREQFEMKIHGRMLDIVAATPETVDSLTKLDLAPEVNVEVRAMGK.

This sequence belongs to the universal ribosomal protein uS10 family. In terms of assembly, part of the 30S ribosomal subunit.

In terms of biological role, involved in the binding of tRNA to the ribosomes. The chain is Small ribosomal subunit protein uS10 from Campylobacter hominis (strain ATCC BAA-381 / DSM 21671 / CCUG 45161 / LMG 19568 / NCTC 13146 / CH001A).